Consider the following 234-residue polypeptide: Sugar fermentation stimulation protein homolog (234 aa).

This sequence belongs to the SfsA family.

The sequence is that of Sugar fermentation stimulation protein homolog from Shewanella baltica (strain OS155 / ATCC BAA-1091).